The chain runs to 139 residues: Large ribosomal subunit protein uL22 (139 aa).

A disordered region spans residues 1–21 (MTAPTPEFRNKKQRKQQVKLR).

Belongs to the universal ribosomal protein uL22 family. In terms of assembly, part of the 50S ribosomal subunit.

Functionally, this protein binds specifically to 23S rRNA; its binding is stimulated by other ribosomal proteins, e.g. L4, L17, and L20. It is important during the early stages of 50S assembly. It makes multiple contacts with different domains of the 23S rRNA in the assembled 50S subunit and ribosome. Its function is as follows. The globular domain of the protein is located near the polypeptide exit tunnel on the outside of the subunit, while an extended beta-hairpin is found that lines the wall of the exit tunnel in the center of the 70S ribosome. This chain is Large ribosomal subunit protein uL22, found in Deinococcus deserti (strain DSM 17065 / CIP 109153 / LMG 22923 / VCD115).